The chain runs to 354 residues: Chaperone protein dnaJ 49 (354 aa).

Residues Asp-99–Gly-163 form the J domain. Residues Cys-237–Phe-257 traverse the membrane as a helical segment.

Belongs to the DnaJ family. C/III subfamily.

The protein localises to the membrane. Plays a continuous role in plant development probably in the structural organization of compartments. The polypeptide is Chaperone protein dnaJ 49 (ATJ49) (Arabidopsis thaliana (Mouse-ear cress)).